A 297-amino-acid chain; its full sequence is Tyrosine recombinase XerD (297 aa).

In terms of domain architecture, Core-binding (CB) spans 1–86 (MNDLIEDFLH…SLRSFFHYLM (86 aa)). The 185-residue stretch at 107-291 (GLPKVLNLDD…TKLRLKDVYK (185 aa)) folds into the Tyr recombinase domain. Active-site residues include R147, K171, H243, R246, and H269. The active-site O-(3'-phospho-DNA)-tyrosine intermediate is the Y278.

Belongs to the 'phage' integrase family. XerD subfamily. Forms a cyclic heterotetrameric complex composed of two molecules of XerC and two molecules of XerD.

The protein resides in the cytoplasm. Functionally, site-specific tyrosine recombinase, which acts by catalyzing the cutting and rejoining of the recombining DNA molecules. The XerC-XerD complex is essential to convert dimers of the bacterial chromosome into monomers to permit their segregation at cell division. It also contributes to the segregational stability of plasmids. The sequence is that of Tyrosine recombinase XerD from Listeria monocytogenes serotype 4b (strain F2365).